Reading from the N-terminus, the 252-residue chain is MFKVVICDDERIIREGLKQIIPWGDYHFNTIYTAKDGVEALSLIQQHQPELVITDIRMPRKNGVDLLNDIAHLDCNVIILSSYDDFEYMKAGIQHHVLDYLLKPVDHAQLEVILGRLVRTLLEQQSQNGRSLAPCHDAFQPLLKVEYDDYYVNQIVDQIKQSYQTKVTVSDLIQHIDVSESYAMRTFKDHVGITIVDYLNRYRILQSLQLLDRHYKHYEIADKVGFSEYKMFSYHFKKYLQMAPSDYCKQAK.

One can recognise a Response regulatory domain in the interval 3–118; sequence KVVICDDERI…QLEVILGRLV (116 aa). 4-aspartylphosphate is present on Asp55. The 98-residue stretch at 153–250 folds into the HTH araC/xylS-type domain; the sequence is NQIVDQIKQS…QMAPSDYCKQ (98 aa). 2 consecutive DNA-binding regions (H-T-H motif) follow at residues 170 to 191 and 217 to 240; these read SDLI…KDHV and HYEI…KKYL.

Post-translationally, phosphorylated by HptS.

Its subcellular location is the cytoplasm. In terms of biological role, member of the two-component regulatory system HptS/HptR that regulates genes involved in hexose phosphate transport system in response to changes in extracellular phosphate sources. Activates uhpT expression to facilitate glucose-6-phosphate/G6P utilization by directly binding to its promoter. Antagonizes CcpA-dependent transcription of a subset of CcpA-regulated genes involved in antibiotic susceptibility. This Staphylococcus aureus (strain bovine RF122 / ET3-1) protein is Transcriptional regulatory protein HptR (hptR).